Here is a 229-residue protein sequence, read N- to C-terminus: 7-cyano-7-deazaguanine synthase (229 aa).

15–25 is an ATP binding site; sequence LSGGLDSATVV. Zn(2+)-binding residues include Cys194, Cys204, Cys207, and Cys210.

It belongs to the QueC family. Zn(2+) serves as cofactor.

It catalyses the reaction 7-carboxy-7-deazaguanine + NH4(+) + ATP = 7-cyano-7-deazaguanine + ADP + phosphate + H2O + H(+). It participates in purine metabolism; 7-cyano-7-deazaguanine biosynthesis. Catalyzes the ATP-dependent conversion of 7-carboxy-7-deazaguanine (CDG) to 7-cyano-7-deazaguanine (preQ(0)). This Pseudomonas savastanoi pv. phaseolicola (strain 1448A / Race 6) (Pseudomonas syringae pv. phaseolicola (strain 1448A / Race 6)) protein is 7-cyano-7-deazaguanine synthase.